The following is a 354-amino-acid chain: Guanine nucleotide-binding protein G(o) subunit alpha (354 aa).

A lipid anchor (N-myristoyl glycine) is attached at Gly-2. The S-palmitoyl cysteine moiety is linked to residue Cys-3. A G-alpha domain is found at 32 to 354 (KDVKLLLLGA…ANNLRGCGLY (323 aa)). Residues 35–48 (KLLLLGAGESGKST) are G1 motif. Residues Glu-43, Lys-46, Ser-47, Thr-48, Ser-152, Leu-176, Arg-177, Thr-178, and Arg-179 each coordinate GTP. Ser-47 contributes to the Mg(2+) binding site. Residues 174 to 182 (DILRTRVKT) form a G2 motif region. A Mg(2+)-binding site is contributed by Thr-182. Residues 197–206 (FRLFDVGGQR) form a G3 motif region. A 5-glutamyl histamine modification is found at Gln-205. Positions 266 to 273 (ILFLNKKD) are G4 motif. The GTP site is built by Asn-270, Asp-273, and Cys-325. Residues 324–329 (TCATDT) form a G5 motif region. Asn-346 bears the Deamidated asparagine; in form Alpha-3 mark. Cys-351 carries the S-palmitoyl cysteine lipid modification.

Belongs to the G-alpha family. G(i/o/t/z) subfamily. G proteins are composed of 3 units; alpha, beta and gamma. The alpha chain contains the guanine nucleotide binding site. Forms a complex with GNB1 and GNG3. Interacts with RGS14. Interacts with RGS16. Interacts with RGS19. Interacts (when palmitoylated) with ADGRG3. Post-translationally, deamidation of Asn-346 converts alpha-1 to alpha-3. In terms of processing, histaminylated at Gln-205 residues by TGM2.

Its subcellular location is the cell membrane. The protein resides in the membrane. It carries out the reaction GTP + H2O = GDP + phosphate + H(+). The GTPase activity is promoted by GTPAse activators, such as RGS14, RGS16 and RGS19. Its function is as follows. Guanine nucleotide-binding proteins (G proteins) function as transducers downstream of G protein-coupled receptors (GPCRs) in numerous signaling cascades. The alpha chain contains the guanine nucleotide binding site and alternates between an active, GTP-bound state and an inactive, GDP-bound state. Signaling by an activated GPCR promotes GDP release and GTP binding. The alpha subunit has a low GTPase activity that converts bound GTP to GDP, thereby terminating the signal. Both GDP release and GTP hydrolysis are modulated by numerous regulatory proteins. Signaling is mediated via effector proteins, such as adenylate cyclase. Inhibits adenylate cyclase activity, leading to decreased intracellular cAMP levels. In Cricetulus longicaudatus (Long-tailed dwarf hamster), this protein is Guanine nucleotide-binding protein G(o) subunit alpha (GNAO1).